The chain runs to 374 residues: MLQTQELQINIGPQHPSTHGVFRMIVTVDGETIVDLKPVFGYLHRNHEQLAEVSTYIQSMPYTDRLDYFNSMANNHALALAVEKLAGISVPQRAEYIRVLMVELTRILNHASAVGFLLNDMGAWQTPLMFGMREREKILDLFEMASGARMMCNYFRFGGVWRDLPPEFIPQLKELMQGLPSFFDEFERLLKENEILLSRTINVGVLPKEVAVSYSVTGPVLRASGIPYDVRRAEPYSVYDELDFDIPIGSVGDVYDRFLIRIEEMRQSYRILQQVIERLPDTTGGHINPAMANIGKQKALRPPPGDAYARIESPKGELGFYLVSDGSERPYRYKVRAPSFINLTPLGDMCRGHKVADVVVILGSIDIVMGEVDK.

Belongs to the complex I 49 kDa subunit family. NDH-1 is composed of 14 different subunits. Subunits NuoB, C, D, E, F, and G constitute the peripheral sector of the complex.

It localises to the cell membrane. The catalysed reaction is a quinone + NADH + 5 H(+)(in) = a quinol + NAD(+) + 4 H(+)(out). In terms of biological role, NDH-1 shuttles electrons from NADH, via FMN and iron-sulfur (Fe-S) centers, to quinones in the respiratory chain. The immediate electron acceptor for the enzyme in this species is believed to be ubiquinone. Couples the redox reaction to proton translocation (for every two electrons transferred, four hydrogen ions are translocated across the cytoplasmic membrane), and thus conserves the redox energy in a proton gradient. The polypeptide is NADH-quinone oxidoreductase subunit D 1 (Roseiflexus sp. (strain RS-1)).